Consider the following 140-residue polypeptide: T cell receptor alpha chain constant (140 aa).

The region spanning 19–107 (KSVCLFTDFD…LVEKSFETDT (89 aa)) is the Ig-like C1-type domain. The cysteines at positions 22 and 72 are disulfide-linked. 4 N-linked (GlcNAc...) asparagine glycosylation sites follow: asparagine 32, asparagine 66, asparagine 77, and asparagine 113. Residues 94–115 (CDVKLVEKSFETDTNLNFQNLS) are connecting peptide. Residues 116 to 138 (VIGFRILLLKVAGFNLLMTLRLW) form a helical membrane-spanning segment. Residues 139–140 (SS) lie on the Cytoplasmic side of the membrane.

In terms of assembly, alpha-beta TR is a heterodimer composed of an alpha and beta chain; disulfide-linked. The alpha-beta TR is associated with the transmembrane signaling CD3 coreceptor proteins to form the TR-CD3 (TcR or TCR). The assembly of alpha-beta TR heterodimers with CD3 occurs in the endoplasmic reticulum where a single alpha-beta TR heterodimer associates with one CD3D-CD3E heterodimer, one CD3G-CD3E heterodimer and one CD247 homodimer forming a stable octameric structure. CD3D-CD3E and CD3G-CD3E heterodimers preferentially associate with TR alpha and TR beta chains, respectively. The association of the CD247 homodimer is the last step of TcR assembly in the endoplasmic reticulum and is required for transport to the cell surface.

The protein localises to the cell membrane. Functionally, constant region of T cell receptor (TR) alpha chain. Alpha-beta T cell receptors are antigen specific receptors which are essential to the immune response and are present on the cell surface of T lymphocytes. Recognize peptide-major histocompatibility (MH) (pMH) complexes that are displayed by antigen presenting cells (APC), a prerequisite for efficient T cell adaptive immunity against pathogens. Binding of alpha-beta TR to pMH complex initiates TR-CD3 clustering on the cell surface and intracellular activation of LCK that phosphorylates the ITAM motifs of CD3G, CD3D, CD3E and CD247 enabling the recruitment of ZAP70. In turn, ZAP70 phosphorylates LAT, which recruits numerous signaling molecules to form the LAT signalosome. The LAT signalosome propagates signal branching to three major signaling pathways, the calcium, the mitogen-activated protein kinase (MAPK) kinase and the nuclear factor NF-kappa-B (NF-kB) pathways, leading to the mobilization of transcription factors that are critical for gene expression and essential for T cell growth and differentiation. The T cell repertoire is generated in the thymus, by V-(D)-J rearrangement. This repertoire is then shaped by intrathymic selection events to generate a peripheral T cell pool of self-MH restricted, non-autoaggressive T cells. Post-thymic interaction of alpha-beta TR with the pMH complexes shapes TR structural and functional avidity. The protein is T cell receptor alpha chain constant of Homo sapiens (Human).